Here is a 593-residue protein sequence, read N- to C-terminus: Zinc metalloproteinase-disintegrin-like kaouthiagin-like (593 aa).

A signal peptide spans methionine 1 to serine 20. Residues isoleucine 21–glutamate 196 constitute a propeptide that is removed on maturation. The region spanning lysine 205 to proline 400 is the Peptidase M12B domain. Ca(2+)-binding residues include glutamate 208 and aspartate 292. Cystine bridges form between cysteine 316–cysteine 395, cysteine 356–cysteine 379, and cysteine 358–cysteine 363. Asparagine 319 is a glycosylation site (N-linked (GlcNAc...) asparagine). Histidine 341, histidine 345, and histidine 351 together coordinate Zn(2+). Residues cysteine 395, asparagine 398, isoleucine 410, asparagine 413, phenylalanine 415, glutamate 417, glutamate 420, and aspartate 423 each contribute to the Ca(2+) site. The Disintegrin domain maps to proline 408–asparagine 477. 12 disulfide bridges follow: cysteine 411-cysteine 440, cysteine 422-cysteine 435, cysteine 424-cysteine 430, cysteine 434-cysteine 462, cysteine 449-cysteine 469, cysteine 456-cysteine 488, cysteine 481-cysteine 493, cysteine 500-cysteine 550, cysteine 515-cysteine 558, cysteine 528-cysteine 538, cysteine 545-cysteine 581, and cysteine 575-cysteine 586. Residues aspartate 455–aspartate 457 carry the D/ECD-tripeptide motif. Residues aspartate 457, leucine 458, glutamate 460, aspartate 472, and serine 473 each contribute to the Ca(2+) site. An N-linked (GlcNAc...) asparagine glycan is attached at asparagine 490.

The protein belongs to the venom metalloproteinase (M12B) family. P-III subfamily. P-IIIa sub-subfamily. Monomer. Zn(2+) is required as a cofactor. In terms of tissue distribution, expressed by the venom gland.

It localises to the secreted. Its function is as follows. Snake venom zinc metalloproteinase that cleaves the membrane-bound precursor of TNF-alpha (TNF) into its mature soluble form showing the same digestion pattern than ADAM17. This Naja atra (Chinese cobra) protein is Zinc metalloproteinase-disintegrin-like kaouthiagin-like.